A 601-amino-acid chain; its full sequence is Elongation factor 4 (601 aa).

The region spanning 5–187 (EHIRNFSIIA…AIVERLPAPE (183 aa)) is the tr-type G domain. Residues 17 to 22 (DHGKST) and 134 to 137 (NKVD) contribute to the GTP site.

It belongs to the TRAFAC class translation factor GTPase superfamily. Classic translation factor GTPase family. LepA subfamily.

The protein resides in the cell inner membrane. It carries out the reaction GTP + H2O = GDP + phosphate + H(+). Required for accurate and efficient protein synthesis under certain stress conditions. May act as a fidelity factor of the translation reaction, by catalyzing a one-codon backward translocation of tRNAs on improperly translocated ribosomes. Back-translocation proceeds from a post-translocation (POST) complex to a pre-translocation (PRE) complex, thus giving elongation factor G a second chance to translocate the tRNAs correctly. Binds to ribosomes in a GTP-dependent manner. The protein is Elongation factor 4 of Nitratidesulfovibrio vulgaris (strain DSM 19637 / Miyazaki F) (Desulfovibrio vulgaris).